The primary structure comprises 481 residues: 3-isopropylmalate dehydratase large subunit (481 aa).

Positions 357, 417, and 420 each coordinate [4Fe-4S] cluster.

Belongs to the aconitase/IPM isomerase family. LeuC type 1 subfamily. As to quaternary structure, heterodimer of LeuC and LeuD. [4Fe-4S] cluster serves as cofactor.

The enzyme catalyses (2R,3S)-3-isopropylmalate = (2S)-2-isopropylmalate. Its pathway is amino-acid biosynthesis; L-leucine biosynthesis; L-leucine from 3-methyl-2-oxobutanoate: step 2/4. Its function is as follows. Catalyzes the isomerization between 2-isopropylmalate and 3-isopropylmalate, via the formation of 2-isopropylmaleate. This is 3-isopropylmalate dehydratase large subunit from Maricaulis maris (strain MCS10) (Caulobacter maris).